Consider the following 558-residue polypeptide: Poly(A) polymerase PAPalpha (558 aa).

The segment covering Met-1–Pro-17 has biased composition (polar residues). Residues Met-1 to Lys-20 form a disordered region. ATP contacts are provided by residues Phe-86–Ser-88, Asp-99–Asp-101, Asp-153, Lys-214, Tyr-223, and Gly-232–Val-233. The Mg(2+) site is built by Asp-99, Asp-101, and Asp-153. The tract at residues Val-516–Ser-558 is disordered. Residues Ile-535 to Asn-545 show a composition bias toward basic and acidic residues. A compositionally biased stretch (low complexity) spans Ser-547 to Ser-558.

Belongs to the poly(A) polymerase family. The cofactor is Mg(2+). Mn(2+) is required as a cofactor.

Its subcellular location is the nucleus. The enzyme catalyses RNA(n) + ATP = RNA(n)-3'-adenine ribonucleotide + diphosphate. In terms of biological role, polymerase that creates the 3'-poly(A) tail of mRNA's. May acquire specificity through interaction with a cleavage and polyadenylation factor. This chain is Poly(A) polymerase PAPalpha (PAPALPHA), found in Candida albicans (strain SC5314 / ATCC MYA-2876) (Yeast).